Consider the following 165-residue polypeptide: MAEENQVENSEAAQQSPEFAIQRIYTKDVSFETPNSPAVFQLDWKPEIQLDLDTRSTKLADNTYEVVLSVTVTATVEDKTAFLAEVQQAGIFTIGNLPEAQLAHTIGAFCPTTLFPYARETVASLVNRGSFPQFNLTPVNFEGLYASYVQQRATQENVAQSSETH.

It belongs to the SecB family. In terms of assembly, homotetramer, a dimer of dimers. One homotetramer interacts with 1 SecA dimer.

Its subcellular location is the cytoplasm. One of the proteins required for the normal export of preproteins out of the cell cytoplasm. It is a molecular chaperone that binds to a subset of precursor proteins, maintaining them in a translocation-competent state. It also specifically binds to its receptor SecA. This is Protein-export protein SecB from Colwellia psychrerythraea (strain 34H / ATCC BAA-681) (Vibrio psychroerythus).